Consider the following 213-residue polypeptide: Thiamine-phosphate synthase (213 aa).

4-amino-2-methyl-5-(diphosphooxymethyl)pyrimidine contacts are provided by residues 40–44 (QYRDK) and Asn72. Asp73 and Asp91 together coordinate Mg(2+). Thr110 lines the 4-amino-2-methyl-5-(diphosphooxymethyl)pyrimidine pocket. 137 to 139 (SHT) contributes to the 2-[(2R,5Z)-2-carboxy-4-methylthiazol-5(2H)-ylidene]ethyl phosphate binding site. Position 140 (Lys140) interacts with 4-amino-2-methyl-5-(diphosphooxymethyl)pyrimidine. Gly167 contacts 2-[(2R,5Z)-2-carboxy-4-methylthiazol-5(2H)-ylidene]ethyl phosphate.

This sequence belongs to the thiamine-phosphate synthase family. Requires Mg(2+) as cofactor.

The catalysed reaction is 2-[(2R,5Z)-2-carboxy-4-methylthiazol-5(2H)-ylidene]ethyl phosphate + 4-amino-2-methyl-5-(diphosphooxymethyl)pyrimidine + 2 H(+) = thiamine phosphate + CO2 + diphosphate. The enzyme catalyses 2-(2-carboxy-4-methylthiazol-5-yl)ethyl phosphate + 4-amino-2-methyl-5-(diphosphooxymethyl)pyrimidine + 2 H(+) = thiamine phosphate + CO2 + diphosphate. It carries out the reaction 4-methyl-5-(2-phosphooxyethyl)-thiazole + 4-amino-2-methyl-5-(diphosphooxymethyl)pyrimidine + H(+) = thiamine phosphate + diphosphate. It participates in cofactor biosynthesis; thiamine diphosphate biosynthesis; thiamine phosphate from 4-amino-2-methyl-5-diphosphomethylpyrimidine and 4-methyl-5-(2-phosphoethyl)-thiazole: step 1/1. Functionally, condenses 4-methyl-5-(beta-hydroxyethyl)thiazole monophosphate (THZ-P) and 2-methyl-4-amino-5-hydroxymethyl pyrimidine pyrophosphate (HMP-PP) to form thiamine monophosphate (TMP). The protein is Thiamine-phosphate synthase of Stutzerimonas stutzeri (strain A1501) (Pseudomonas stutzeri).